The following is a 610-amino-acid chain: Elongation factor 4 (610 aa).

The tr-type G domain maps to 14-198 (ANIRNFSIVA…AIVTRLPPPQ (185 aa)). GTP contacts are provided by residues 26–31 (DHGKST) and 145–148 (NKVD).

It belongs to the TRAFAC class translation factor GTPase superfamily. Classic translation factor GTPase family. LepA subfamily.

The protein localises to the cell inner membrane. It carries out the reaction GTP + H2O = GDP + phosphate + H(+). In terms of biological role, required for accurate and efficient protein synthesis under certain stress conditions. May act as a fidelity factor of the translation reaction, by catalyzing a one-codon backward translocation of tRNAs on improperly translocated ribosomes. Back-translocation proceeds from a post-translocation (POST) complex to a pre-translocation (PRE) complex, thus giving elongation factor G a second chance to translocate the tRNAs correctly. Binds to ribosomes in a GTP-dependent manner. The protein is Elongation factor 4 of Nitrobacter hamburgensis (strain DSM 10229 / NCIMB 13809 / X14).